The chain runs to 142 residues: MPTPSMEDYIEQIYLLIDEKGYARVSDIAEALSVHPSSVTKMVQKLDKDEYLIYEKYRGLVLTSKGKKIGERLVYRHELLEQFMRIIGVDESKIYNDVEGIEHHLSWESIDRIGDLVQYFEQDEVRVKTLRGVQKANEEKSN.

One can recognise an HTH dtxR-type domain in the interval 1–63 (MPTPSMEDYI…YEKYRGLVLT (63 aa)). Residues aspartate 8, glutamate 11, histidine 77, glutamate 99, glutamate 102, and histidine 103 each contribute to the Mn(2+) site.

This sequence belongs to the DtxR/MntR family. In terms of assembly, homodimer.

It is found in the cytoplasm. With respect to regulation, DNA binding is strongly activated by Mn(2+). In terms of biological role, central regulator of manganese homeostasis. This Bacillus mycoides (strain KBAB4) (Bacillus weihenstephanensis) protein is HTH-type transcriptional regulator MntR.